An 81-amino-acid chain; its full sequence is Weak neurotoxin OH-72 (81 aa).

The N-terminal stretch at leucine 1 to threonine 16 is a signal peptide. Cystine bridges form between cysteine 19-cysteine 40, cysteine 22-cysteine 27, cysteine 33-cysteine 58, cysteine 62-cysteine 73, and cysteine 74-cysteine 79.

Belongs to the three-finger toxin family. Ancestral subfamily. Orphan group II sub-subfamily. Expressed by the venom gland.

It is found in the secreted. Binds with low affinity to muscular (alpha-1-beta-1-delta-epsilon/CHRNA1-CHRNB1-CHRND-CHRNE) and very low affinity to neuronal (alpha-7/CHRNA7) nicotinic acetylcholine receptor (nAChR). This is Weak neurotoxin OH-72 from Ophiophagus hannah (King cobra).